Here is a 263-residue protein sequence, read N- to C-terminus: Hydroxyacylglutathione hydrolase (263 aa).

Residues H55, H57, D59, H60, H117, D134, and H172 each coordinate Zn(2+).

The protein belongs to the metallo-beta-lactamase superfamily. Glyoxalase II family. Monomer. It depends on Zn(2+) as a cofactor.

The enzyme catalyses an S-(2-hydroxyacyl)glutathione + H2O = a 2-hydroxy carboxylate + glutathione + H(+). The protein operates within secondary metabolite metabolism; methylglyoxal degradation; (R)-lactate from methylglyoxal: step 2/2. Thiolesterase that catalyzes the hydrolysis of S-D-lactoyl-glutathione to form glutathione and D-lactic acid. This chain is Hydroxyacylglutathione hydrolase, found in Shewanella baltica (strain OS223).